The following is a 2193-amino-acid chain: Highly reducing polyketide synthase VdtX (2193 aa).

Residues M1–S417 enclose the Ketosynthase family 3 (KS3) domain. Active-site for beta-ketoacyl synthase activity residues include C170, H306, and H340. A malonyl-CoA:ACP transacylase (MAT) domain region spans residues V513–F809. An N-terminal hotdog fold region spans residues H877–R1001. The tract at residues H877–N1128 is dehydratase (DH) domain. The PKS/mFAS DH domain occupies H877–E1202. H909 serves as the catalytic Proton acceptor; for dehydratase activity. The interval S1032–E1202 is C-terminal hotdog fold. D1093 functions as the Proton donor; for dehydratase activity in the catalytic mechanism. Residues N1256 to A1390 are methyltransferase (CMet) domain. Residues G1575–L1783 are enoyl reductase (ER) domain. Residues A1807–Q1981 form a ketoreductase (KR) domain region. A Carrier domain is found at P2102–L2183. Position 2143 is an O-(pantetheine 4'-phosphoryl)serine (S2143).

Its function is as follows. Highly reducing polyketide synthase; part of the gene cluster that mediates the biosynthesis of viriditoxin, one of the 'classical' secondary metabolites produced by fungi and that has antibacterial activity. The first step is performed by the polyketide synthase VdtA which condenses one acetyl-CoA and 6 malonyl-CoA units to form the heptaketide monomer backbone of viriditoxin. The product of VdtA is then O-methylated on C7 by the O-methyltransferase VdtC. The O-methyl group is important for the stereoselective coupling of the monomers at the final step of viriditoxin biosynthesis. The short-chain dehydrogenase/reductase VdtF is involved in the reduction of the C3-C4 double bond. The FAD-binding monooxygenase VdtE then converts the ketone group into a methyl-ester group to yield semi-viriditoxin. Finally, the laccase VdtB is involved in dimerization of 2 semi-viriditoxin molecules to yield the final viriditoxin. The non-catalytic carboxylesterase-like protein VdtD affects the stereochemistical outcome of the coupling. The highly reducing polyketide synthase VdtX is not involved in viriditoxin synthesis, but might possibly play a role in the production of additional metabolites not identified yet. The chain is Highly reducing polyketide synthase VdtX from Byssochlamys spectabilis (Paecilomyces variotii).